The following is a 1287-amino-acid chain: Rho GTPase-activating protein 33 (1287 aa).

The disordered stretch occupies residues 1–40 (MVARSTDSLDGPGEGSVQPLPTAGGPSVKGKPGKRLSAPR). Ser-8 carries the phosphoserine modification. The PX; atypical domain occupies 59 to 168 (FGHIQLLLSP…CGPVLTWMEL (110 aa)). Residues 186 to 248 (PAVAAAHVIK…PSECVELFTE (63 aa)) form the SH3 domain. One can recognise a Rho-GAP domain in the interval 315-510 (CDLGEHLSNS…FLLTHVDVLF (196 aa)). 6 disordered regions span residues 551–792 (RTQG…SPAA), 813–832 (AGGA…GRSL), 859–1030 (KLRG…VPTP), 1056–1075 (GPPS…SLGP), 1090–1134 (GASE…SPDF), and 1146–1287 (PPDH…RSYC). A compositionally biased stretch (low complexity) spans 558–571 (TPTEPTTPKAPASP). Ser-570 carries the post-translational modification Phosphoserine. Residues 572-584 (AERRKGERGEKQR) show a composition bias toward basic and acidic residues. Residues 622 to 645 (SGSRPDTVTLRSAKSEESLSSQAS) show a composition bias toward polar residues. At Ser-636 the chain carries Phosphoserine. A compositionally biased stretch (low complexity) spans 672–709 (AGSCESLSSSSSSESSSSESSSSSSESSAAGLGALSGS). Position 727 is a phosphoserine (Ser-727). Positions 752 to 766 (PGDPAPPASPAPPAP) are enriched in pro residues. 2 stretches are compositionally biased toward low complexity: residues 813 to 829 (AGGA…LSPG) and 896 to 919 (PARL…SQQE). 2 stretches are compositionally biased toward polar residues: residues 972-981 (RQQSDGSLLR) and 1019-1028 (SPCSVPSQVP). Position 1169 is a phosphotyrosine (Tyr-1169). Positions 1175–1189 (GPRGPSPASSSSSSP) are enriched in low complexity. Arg-1244 is subject to Omega-N-methylarginine. The span at 1274–1287 (SWSLHSEGQTRSYC) shows a compositional bias: polar residues.

Belongs to the PX domain-containing GAP family. As to quaternary structure, specifically interacts with CDC42 and RHOQ/TC10 through its Rho-GAP domain. Interacts with NEK6.

Its function is as follows. May be involved in several stages of intracellular trafficking. Could play an important role in the regulation of glucose transport by insulin. May act as a downstream effector of RHOQ/TC10 in the regulation of insulin-stimulated glucose transport. This chain is Rho GTPase-activating protein 33 (ARHGAP33), found in Homo sapiens (Human).